Here is a 235-residue protein sequence, read N- to C-terminus: C-type lectin domain family 2 member D-related protein (235 aa).

The tract at residues Met1–Thr50 is disordered. Topologically, residues Met1–Lys75 are cytoplasmic. Residues Ser30–Thr50 are compositionally biased toward low complexity. The helical; Signal-anchor for type II membrane protein transmembrane segment at Leu76–Ala96 threads the bilayer. The Extracellular segment spans residues Leu97–Pro235. The C-type lectin domain occupies Phe121–Ser232. N-linked (GlcNAc...) asparagine glycosylation occurs at Asn134.

It localises to the cell membrane. Lectin-type cell surface receptor. The protein is C-type lectin domain family 2 member D-related protein of Rattus norvegicus (Rat).